Here is a 446-residue protein sequence, read N- to C-terminus: Acyl-lipid (8-3)-desaturase (446 aa).

The region spanning 6–82 (GKTFTWEELA…MKKYYVGTLV (77 aa)) is the Cytochrome b5 heme-binding domain. The heme site is built by histidine 41 and histidine 64. Transmembrane regions (helical) follow at residues 125-145 (ALIF…PFVV) and 150-170 (LQVV…LNPL). The short motif at 171-175 (HDASH) is the Histidine box-1 element. The Histidine box-2 motif lies at 207-212 (HMLGHH). Positions 387-391 (QAVHH) match the Histidine box-3 motif.

Belongs to the fatty acid desaturase type 1 family. Fe(2+) is required as a cofactor.

The protein resides in the membrane. It catalyses the reaction an (8Z,11Z,14Z)-icosatrienoyl-containing glycerolipid + 2 Fe(II)-[cytochrome b5] + O2 + 2 H(+) = (5Z,8Z,11Z,14Z)-eicosatetraenoyl-containing glycerolipid + 2 Fe(III)-[cytochrome b5] + 2 H2O. The enzyme catalyses an (8Z,11Z,14Z,17Z)-eicosatetraenoyl-containing glycerolipid + 2 Fe(II)-[cytochrome b5] + O2 + 2 H(+) = a (5Z,8Z,11Z,14Z,17Z)-eicosapentaenoyl-containing glycerolipid + 2 Fe(III)-[cytochrome b5] + 2 H2O. In terms of biological role, fatty acid desaturase that introduces a cis double bond at the 5-position in 20-carbon polyunsaturated fatty acids incorporated in a glycerolipid that contain a Delta(8) double bond. Involved in the conversion of di-homo-Delta-linolenic acid to arachidonic acid. Essential in the production of eicosanoids. The sequence is that of Acyl-lipid (8-3)-desaturase (DES1) from Mortierella alpina (Oleaginous fungus).